Reading from the N-terminus, the 920-residue chain is MASATVAAAGRALRRAVPLLRRSYQTERGVYGYRPRKAGSGEPRGDRARPSVDHGLARLVTVYCEHGHKAAQINPLFPGQALLDTVPEIQALVQTLQGPFTTTGLLNMGKEEASLEEVLAYLNHIYCGPISIETAQLQSQEEKDWFARRFEELKKETFTTEERKHLSKLLLESQEFDHFLATKFATVKRYGGEGAESMMGFFHELLKLSAYGGITDIIIGMPHRGRLNLLTGLLQLPPELMFRKMRGLSEFPENVAAIGDVLSHLTSSVDLDFGAHRPLHVTMLPNPSHLEAINPVAVGKTRGRQQSQEDGDYSPNGSAQPGDKVICLQVHGDASFCGQGIVLETFTLSNLPHFRIGGSIHLIVNNQLGYTTPAERGRSSLYSSDIGKLVGCAIIHVNGDSPEEVVRATRLAFEYQRQFRKDVIIDLLCYRQWGHNELDEPFFTNPVMYKIIRARKSIPDTYAEHLIASGLMTQEEVSDIKASYYAKLNGHLANVAHYSPPAPHLQARWQGLVQPAACVTTWDTGVPLELLRFVGVKSVEVPEELQLHSHLLKMYVQSRMEKVKNGTNLDWATAETLALGSLLAQGFNVRLSGQDVGRGTFSQRHAMVVCQNTDDVYIPLNHMDPNQKGFLEVSNSPLSEEAVLGFEYGMSIESPKLLPLWEAQFGDFFNGAQIIFDTFISGGEAKWLLQSGLVILLPHGYDGAGPDHSSCRIERFLQMCDSAEEGVDSDTVNMFVVHPTTPAQYFHLLRRQMMRNFRKPLIVASPKMLLRYPVAVSTLEEMAPGTAFKPVIGDSSVDPKNVKTLIFCSGKHFYALLKQRESLGAKKRDFAIIRLEELCPFPLDSLQQEMGKYKHVQDIIWSQEEPQNMGPWSFVYPRFEKQLACKLRLVSRPPLPAPAVGIGTVHQQQHEAILFKTFTS.

An N6-succinyllysine mark is found at Lys-183 and Lys-188. A disordered region spans residues 299–318; sequence GKTRGRQQSQEDGDYSPNGS. Residues Lys-800 and Lys-818 each carry the N6-succinyllysine modification.

The protein belongs to the alpha-ketoglutarate dehydrogenase family. In terms of assembly, the 2-oxoadipate dehydrogenase complex is composed of OADH (2-oxoadipate dehydrogenase; E1a), DLST (dihydrolipoamide succinyltransferase; E2) and DLD (dihydrolipoamide dehydrogenase; E3). E1a functional unit is a dimer. Thiamine diphosphate serves as cofactor.

The protein resides in the mitochondrion. It carries out the reaction N(6)-[(R)-lipoyl]-L-lysyl-[protein] + 2-oxoadipate + H(+) = N(6)-[(R)-S(8)-glutaryldihydrolipoyl]-L-lysyl-[protein] + CO2. It functions in the pathway amino-acid degradation. Functionally, 2-oxoadipate dehydrogenase (E1a) component of the 2-oxoadipate dehydrogenase complex (OADHC). Participates in the first step, rate limiting for the overall conversion of 2-oxoadipate (alpha-ketoadipate) to glutaryl-CoA and CO(2) catalyzed by the whole OADHC. Catalyzes the irreversible decarboxylation of 2-oxoadipate via the thiamine diphosphate (ThDP) cofactor and subsequent transfer of the decarboxylated acyl intermediate on an oxidized dihydrolipoyl group that is covalently amidated to the E2 enzyme (dihydrolipoyllysine-residue succinyltransferase or DLST). Can catalyze the decarboxylation of 2-oxoglutarate in vitro, but at a much lower rate than 2-oxoadipate. Responsible for the last step of L-lysine, L-hydroxylysine and L-tryptophan catabolism with the common product being 2-oxoadipate. This is 2-oxoadipate dehydrogenase complex component E1 (Dhtkd1) from Rattus norvegicus (Rat).